A 130-amino-acid polypeptide reads, in one-letter code: Albumin-1 E (130 aa).

Residues 1–26 (MASVKLASLIVLFATLGMFLTKNVGA) form the signal peptide. 3 cysteine pairs are disulfide-bonded: Cys-29–Cys-46, Cys-33–Cys-48, and Cys-41–Cys-58. 2 propeptides span residues 64-69 (VFLKGN) and 123-130 (LLKSVSTA).

Post-translationally, the C-terminal glycine may be removed from PA1b.

In terms of biological role, PA1b binds to basic 7S globulin (BG) and stimulates its phosphorylation activity. Involved in the signal transduction system to regulate the growth and differentiation as a hormone peptide. Toxic to various insects through binding to a high affinity binding site in the insect gut. The polypeptide is Albumin-1 E (Pisum sativum (Garden pea)).